A 239-amino-acid polypeptide reads, in one-letter code: Sugar fermentation stimulation protein homolog (239 aa).

It belongs to the SfsA family.

The protein is Sugar fermentation stimulation protein homolog of Rhizobium meliloti (strain 1021) (Ensifer meliloti).